Reading from the N-terminus, the 365-residue chain is DNA replication and repair protein RecF (365 aa).

ATP is bound at residue 30–37 (GENGQGKT).

This sequence belongs to the RecF family.

It localises to the cytoplasm. In terms of biological role, the RecF protein is involved in DNA metabolism; it is required for DNA replication and normal SOS inducibility. RecF binds preferentially to single-stranded, linear DNA. It also seems to bind ATP. This Desulfitobacterium hafniense (strain DSM 10664 / DCB-2) protein is DNA replication and repair protein RecF.